A 273-amino-acid chain; its full sequence is Protein FAM216A (273 aa).

Residues 1–47 (MLGQLLPHTARGLGAAEMPGQGPGSDWTERSSSAEPPAVAGTEGGGG) form a disordered region.

It belongs to the FAM216 family.

The chain is Protein FAM216A (FAM216A) from Homo sapiens (Human).